Reading from the N-terminus, the 228-residue chain is Protein LIAT1 (228 aa).

The tract at residues Met1 to Asn108 is disordered. Over residues Tyr12 to Ala24 the composition is skewed to acidic residues. The tract at residues Lys49–Lys71 is lysine-rich domain. Residues Arg50–Gly63 are compositionally biased toward basic residues. The segment covering Leu90–Asn108 has biased composition (basic and acidic residues). Residues Pro113–Tyr165 form an interaction with ATE1 region. Copy 1 of the repeat occupies Ala169–Cys178.

As to quaternary structure, self-associates (via Lys-rich domain); targets LIAT1 to the nucleolus. Interacts with ATE1; it is not a substrate of ATE1, the interaction takes place in the cytoplasm and seems to increase ATE1 arginyltransferase activity. Interacts with JMJD6 and MRPS14. In terms of processing, post-translationally modified by JMJD6 lysyl-hydroxylase activity at its Lys-rich domain, which inhibits its self-association and nucleolar localization. Highly expressed in spleen, thymus, liver and brown adipose tissue. Moderately expressed in liver, testis and lung.

It is found in the nucleus. Its subcellular location is the nucleolus. The protein localises to the cytoplasm. Functionally, participates in nucleolar liquid-liquid phase separation (LLPS) through its N-terminal intrinsically disordered region (IDR). May be involved in ATE1-mediated N-terminal arginylation. This chain is Protein LIAT1, found in Mus musculus (Mouse).